A 414-amino-acid chain; its full sequence is O-methyltransferase sirM (414 aa).

Residue D270 participates in S-adenosyl-L-methionine binding. The active-site Proton acceptor is H321.

This sequence belongs to the class I-like SAM-binding methyltransferase superfamily. Cation-independent O-methyltransferase family. COMT subfamily.

Its pathway is mycotoxin biosynthesis. Functionally, O-methyltransferase; part of the gene cluster that mediates the biosynthesis of sirodesmin PL, an epipolythiodioxopiperazine (ETP) characterized by a disulfide bridged cyclic dipeptide and that acts as a phytotoxin which is involved in the blackleg didease of canola. SirD catalyzes the O-prenylation of L-tyrosine (L-Tyr) in the presence of dimethylallyl diphosphate (DMAPP) to yield 4-O-dimethylallyl-L-Tyr, and therefore represents probably the first pathway-specific enzyme in the biosynthesis of sirodesmin PL. 4-O-dimethylallyl-L-Tyr, then undergoes condensation with L-Ser in a reaction catalyzed by the non-ribosomal peptide synthase sirP to form the diketopiperazine (DKP) backbone. Further bishydroxylation of the DKP performed by the cytochrome P450 monooxygenase sirC leads to the production of the intermediate phomamide. This step is essential to form the reactive thiol group required for toxicity of sirodesmin PL. The next steps of sirodesmin biosynthesis are not well understood yet, but some predictions could be made from intermediate compounds identification. Phomamide is converted into phomalizarine via oxidation, probably by sirT. Further oxidation, methylation (by sirM or sirN) and reduction steps convert phomalizarine to deacetyl sirodesmin. Finally, acetyltransferase sirH probably acetylates deacetyl sirodesmin to produce sirodesmin PL. In Leptosphaeria maculans (Blackleg fungus), this protein is O-methyltransferase sirM.